The following is a 600-amino-acid chain: Probable tripeptidyl-peptidase SED4 (600 aa).

Residues 1 to 22 (MVSFTLRAIGACLIGLPALITA) form the signal peptide. The propeptide at 23–202 (APTSHVSNGF…SVFTSDLEMT (180 aa)) is removed in mature form. N-linked (GlcNAc...) asparagine glycans are attached at residues Asn210 and Asn281. The 389-residue stretch at 212 to 600 (TITPDCIREL…FEKLSKLVLI (389 aa)) folds into the Peptidase S53 domain. Catalysis depends on charge relay system residues Glu288 and Asp292. Residues Asn323 and Asn404 are each glycosylated (N-linked (GlcNAc...) asparagine). The Charge relay system role is filled by Ser504. Ca(2+)-binding residues include Asp546, Ile547, Gly579, and Asp581.

Ca(2+) serves as cofactor.

It is found in the secreted. It localises to the extracellular space. The enzyme catalyses Release of an N-terminal tripeptide from a polypeptide.. Functionally, secreted tripeptidyl-peptidase which degrades proteins at acidic pHs and is involved in virulence. This Trichophyton verrucosum (strain HKI 0517) protein is Probable tripeptidyl-peptidase SED4 (SED4).